Consider the following 554-residue polypeptide: Glucose-6-phosphate isomerase (554 aa).

Catalysis depends on E359, which acts as the Proton donor. Residues H390 and K518 contribute to the active site.

It belongs to the GPI family.

It is found in the cytoplasm. It catalyses the reaction alpha-D-glucose 6-phosphate = beta-D-fructose 6-phosphate. It functions in the pathway carbohydrate biosynthesis; gluconeogenesis. Its pathway is carbohydrate degradation; glycolysis; D-glyceraldehyde 3-phosphate and glycerone phosphate from D-glucose: step 2/4. Catalyzes the reversible isomerization of glucose-6-phosphate to fructose-6-phosphate. The polypeptide is Glucose-6-phosphate isomerase (Pseudomonas putida (strain ATCC 700007 / DSM 6899 / JCM 31910 / BCRC 17059 / LMG 24140 / F1)).